The following is a 309-amino-acid chain: Succinate dehydrogenase [ubiquinone] iron-sulfur subunit 3, mitochondrial (309 aa).

The transit peptide at 1 to 22 (MSSVLRLLGRRICNPAAEKVRL) directs the protein to the mitochondrion. The 92-residue stretch at 69 to 160 (FKIYRWNPDK…PTIITPLPHM (92 aa)) folds into the 2Fe-2S ferredoxin-type domain. Residues Cys-120, Cys-125, and Cys-140 each coordinate [2Fe-2S] cluster. Residues 202–232 (DRKKLDGLYECILCACCTTSCPSYWWNPEEF) form the 4Fe-4S ferredoxin-type domain. [4Fe-4S] cluster contacts are provided by Cys-212, Cys-215, and Cys-218. A [3Fe-4S] cluster-binding site is contributed by Cys-222. Trp-227 serves as a coordination point for a ubiquinone. Cys-270 and Cys-276 together coordinate [3Fe-4S] cluster. Cys-280 is a binding site for [4Fe-4S] cluster.

The protein belongs to the succinate dehydrogenase/fumarate reductase iron-sulfur protein family. Component of complex II composed of eight subunits in plants: four classical SDH subunits SDH1, SDH2, SDH3 and SDH4 (a flavoprotein (FP), an iron-sulfur protein (IP), and a cytochrome b composed of a large and a small subunit.), as well as four subunits unknown in mitochondria from bacteria and heterotrophic eukaryotes. Requires [2Fe-2S] cluster as cofactor. [3Fe-4S] cluster serves as cofactor. [4Fe-4S] cluster is required as a cofactor.

Its subcellular location is the mitochondrion inner membrane. The enzyme catalyses a quinone + succinate = fumarate + a quinol. The protein operates within carbohydrate metabolism; tricarboxylic acid cycle; fumarate from succinate (eukaryal route): step 1/1. Functionally, iron-sulfur protein (IP) subunit of succinate dehydrogenase (SDH) that is involved in complex II of the mitochondrial electron transport chain and is responsible for transferring electrons from succinate to ubiquinone (coenzyme Q). The sequence is that of Succinate dehydrogenase [ubiquinone] iron-sulfur subunit 3, mitochondrial (SDH2-3) from Arabidopsis thaliana (Mouse-ear cress).